Here is a 115-residue protein sequence, read N- to C-terminus: NADH-ubiquinone oxidoreductase chain 3 (115 aa).

3 helical membrane-spanning segments follow: residues 3–23 (LMLTLLTNTLLASLLVLIAFW), 55–75 (FFLVAITFLLFDLEIALLLPL), and 84–104 (LNTMLIMALVLISLLAISLAY).

This sequence belongs to the complex I subunit 3 family. Core subunit of respiratory chain NADH dehydrogenase (Complex I) which is composed of 45 different subunits. Interacts with TMEM186. Interacts with TMEM242.

It localises to the mitochondrion inner membrane. It carries out the reaction a ubiquinone + NADH + 5 H(+)(in) = a ubiquinol + NAD(+) + 4 H(+)(out). Its function is as follows. Core subunit of the mitochondrial membrane respiratory chain NADH dehydrogenase (Complex I) which catalyzes electron transfer from NADH through the respiratory chain, using ubiquinone as an electron acceptor. Essential for the catalytic activity of complex I. The chain is NADH-ubiquinone oxidoreductase chain 3 from Equus caballus (Horse).